Consider the following 359-residue polypeptide: tRNA N6-adenosine threonylcarbamoyltransferase (359 aa).

His-115 and His-119 together coordinate Fe cation. Substrate contacts are provided by residues 137-141 (LVSGG), Asp-170, Gly-183, and Asn-283. Asp-311 lines the Fe cation pocket. Residues 328–359 (APDSLDIAPRSRWPLDEKSAPVFGTGRRGAKA) form a disordered region.

Belongs to the KAE1 / TsaD family. Requires Fe(2+) as cofactor.

It localises to the cytoplasm. The enzyme catalyses L-threonylcarbamoyladenylate + adenosine(37) in tRNA = N(6)-L-threonylcarbamoyladenosine(37) in tRNA + AMP + H(+). In terms of biological role, required for the formation of a threonylcarbamoyl group on adenosine at position 37 (t(6)A37) in tRNAs that read codons beginning with adenine. Is involved in the transfer of the threonylcarbamoyl moiety of threonylcarbamoyl-AMP (TC-AMP) to the N6 group of A37, together with TsaE and TsaB. TsaD likely plays a direct catalytic role in this reaction. This chain is tRNA N6-adenosine threonylcarbamoyltransferase, found in Brucella abortus (strain S19).